The following is a 306-amino-acid chain: Pantothenate kinase (306 aa).

ATP is bound at residue 91 to 98; it reads GSVAVGKS.

Belongs to the prokaryotic pantothenate kinase family.

Its subcellular location is the cytoplasm. The enzyme catalyses (R)-pantothenate + ATP = (R)-4'-phosphopantothenate + ADP + H(+). Its pathway is cofactor biosynthesis; coenzyme A biosynthesis; CoA from (R)-pantothenate: step 1/5. The protein is Pantothenate kinase of Streptococcus pneumoniae (strain JJA).